A 159-amino-acid chain; its full sequence is Protein-export protein SecB (159 aa).

It belongs to the SecB family. In terms of assembly, homotetramer, a dimer of dimers. One homotetramer interacts with 1 SecA dimer.

It is found in the cytoplasm. In terms of biological role, one of the proteins required for the normal export of preproteins out of the cell cytoplasm. It is a molecular chaperone that binds to a subset of precursor proteins, maintaining them in a translocation-competent state. It also specifically binds to its receptor SecA. This chain is Protein-export protein SecB, found in Nitrobacter hamburgensis (strain DSM 10229 / NCIMB 13809 / X14).